The sequence spans 206 residues: Ras-related protein ralB-A (206 aa).

Position 21–28 (21–28 (GSGGVGKS)) interacts with GTP. Positions 43-51 (YEPTKADSY) match the Effector region motif. GTP-binding positions include 68-72 (DTAGQ) and 128-131 (NKSD). Positions 180–189 (KMSENKDKNG) are enriched in basic and acidic residues. A disordered region spans residues 180 to 206 (KMSENKDKNGKKSGKSKKGFKQRCCLL). Basic residues predominate over residues 190 to 200 (KKSGKSKKGFK). Cys-203 is subject to Cysteine methyl ester. Cys-203 carries S-geranylgeranyl cysteine lipidation. Positions 204–206 (CLL) are cleaved as a propeptide — removed in mature form.

The protein belongs to the small GTPase superfamily. Ras family. In terms of assembly, interacts with ralbp1 and rap1gds1. Weakly expressed in adult tissues and highest levels were found in heart, brain and testes.

Its subcellular location is the cell membrane. The protein localises to the midbody. It carries out the reaction GTP + H2O = GDP + phosphate + H(+). In terms of biological role, multifunctional GTPase involved in a variety of cellular processes including gene expression, cell migration, cell proliferation, oncogenic transformation and membrane trafficking. Accomplishes its multiple functions by interacting with distinct downstream effectors. Acts as a GTP sensor for GTP-dependent exocytosis of dense core vesicles. Required both to stabilize the assembly of the exocyst complex and to localize functional exocyst complexes to the leading edge of migrating cells. Required for suppression of apoptosis. In late stages of cytokinesis, upon completion of the bridge formation between dividing cells, mediates exocyst recruitment to the midbody to drive abscission. Regulates the actin cytoskeleton to play a role in gastrulation or neurulation. During the cleavage stages, the GTP-bound form induces a cortical reaction that affects the localization of pigment granules. Activated by the FGF pathway via ras and ral-GDS, but independently of raf. Directs ralbp1 to the plasma membrane. Involved in ligand-dependent receptor mediated endocytosis of the EGF and insulin receptors. This chain is Ras-related protein ralB-A (ralb-a), found in Xenopus laevis (African clawed frog).